A 334-amino-acid polypeptide reads, in one-letter code: Fructose-1,6-bisphosphatase class 1 (334 aa).

Mg(2+) contacts are provided by Glu-87, Asp-106, Leu-108, and Asp-109. Residues 109–112 (DGSS), Asn-208, and Lys-274 contribute to the substrate site. Glu-280 lines the Mg(2+) pocket.

Belongs to the FBPase class 1 family. As to quaternary structure, homotetramer. Requires Mg(2+) as cofactor.

It localises to the cytoplasm. It catalyses the reaction beta-D-fructose 1,6-bisphosphate + H2O = beta-D-fructose 6-phosphate + phosphate. Its pathway is carbohydrate biosynthesis; gluconeogenesis. This is Fructose-1,6-bisphosphatase class 1 from Psychrobacter sp. (strain PRwf-1).